An 80-amino-acid chain; its full sequence is Conotoxin Bu14 (80 aa).

The N-terminal stretch at A1–A8 is a signal peptide. The propeptide occupies A9–R40. 3 cysteine pairs are disulfide-bonded: C41/C55, C48/C59, and C54/C69.

It belongs to the conotoxin O1 superfamily. In terms of tissue distribution, expressed by the venom duct.

It is found in the secreted. The polypeptide is Conotoxin Bu14 (Conus bullatus (Bubble cone)).